Here is a 587-residue protein sequence, read N- to C-terminus: Phosphatidylinositol-3-phosphatase SAC1 (587 aa).

Residues 1–520 lie on the Cytoplasmic side of the membrane; the sequence is MATAAYEQLK…SPLSVPRDWK (520 aa). In terms of domain architecture, SAC spans 122-451; the sequence is LNHVLNVDGF…ANACAKQYAG (330 aa). Positions 452 to 587 are essential for phosphatidylinositol-4-phosphate phosphatase activity; the sequence is TGALKTDFTR…PRLVQKEKID (136 aa). Lys-456 is subject to N6-acetyllysine. The chain crosses the membrane as a helical span at residues 521–541; the sequence is FLALPIIMVVAFSMCIICLLM. At 542 to 548 the chain is on the lumenal side; the sequence is AGDTWTE. A helical membrane pass occupies residues 549-569; it reads TLAYVLFWGVASIGTFFIILY. The Cytoplasmic portion of the chain corresponds to 570–587; the sequence is NGKDFVDAPRLVQKEKID.

In terms of assembly, interacts with TMEM39A. Interacts with SEC23A and SEC24A; this interaction is reduced in the absence of TMEM39A. Interacts with PLEKHA3 and VAPA and/or VAPB to form a ternary complex.

It is found in the endoplasmic reticulum membrane. Its subcellular location is the golgi apparatus membrane. It carries out the reaction a 1,2-diacyl-sn-glycero-3-phospho-(1D-myo-inositol-3-phosphate) + H2O = a 1,2-diacyl-sn-glycero-3-phospho-(1D-myo-inositol) + phosphate. The catalysed reaction is a 1,2-diacyl-sn-glycero-3-phospho-(1D-myo-inositol 4-phosphate) + H2O = a 1,2-diacyl-sn-glycero-3-phospho-(1D-myo-inositol) + phosphate. In terms of biological role, phosphoinositide phosphatase which catalyzes the hydrolysis of phosphatidylinositol 4-phosphate (PtdIns(4)P), phosphatidylinositol 3-phosphate (PtdIns(3)P) and has low activity towards phosphatidylinositol-3,5-bisphosphate (PtdIns(3,5)P2). Shows a very robust PtdIns(4)P phosphatase activity when it binds PtdIns(4)P in a 'cis' configuration in the cellular environment, with much less activity seen when it binds PtdIns(4)P in 'trans' configuration. PtdIns(4)P phosphatase activity (when it binds PtdIns(4)P in 'trans' configuration) is enhanced in the presence of PLEKHA3. This is Phosphatidylinositol-3-phosphatase SAC1 (SACM1L) from Pongo abelii (Sumatran orangutan).